The primary structure comprises 425 residues: Meiotic recombination protein spo-11 (425 aa).

Residues 1-38 (MYEYSFNPNIDHEPGSVESQQSTIYSDSDDSDDSFLDD) are disordered. Residues 15–158 (GSVESQQSTI…LNILSCGRGI (144 aa)) form the Topo IIA-type catalytic domain. The span at 27–38 (DSDDSDDSFLDD) shows a compositional bias: acidic residues. Tyr-119 serves as the catalytic O-(5'-phospho-DNA)-tyrosine intermediate. Glu-202 and Asp-255 together coordinate Mg(2+).

Belongs to the TOP6A family. Requires Mg(2+) as cofactor.

The protein localises to the nucleus. The enzyme catalyses ATP-dependent breakage, passage and rejoining of double-stranded DNA.. Required for meiotic recombination. Mediates DNA cleavage that forms the double-strand breaks (DSB) that initiate meiotic recombination. This chain is Meiotic recombination protein spo-11 (spo-11), found in Caenorhabditis elegans.